The chain runs to 547 residues: Malolactic enzyme (547 aa).

Y92 acts as the Proton donor in catalysis. K165 serves as the catalytic Proton acceptor. Substrate is bound at residue K165. Mn(2+)-binding residues include E236, D237, and D260. Residues 293–296 (AGTA), N405, and N450 contribute to the NAD(+) site. N450 contributes to the substrate binding site.

The protein belongs to the malic enzymes family. As to quaternary structure, homodimer. Requires Mn(2+) as cofactor. It depends on NAD(+) as a cofactor.

It carries out the reaction (S)-malate + H(+) = (S)-lactate + CO2. In terms of biological role, involved in the malolactic fermentation (MLF) of wine, which results in a natural decrease in acidity and favorable changes in wine flavors. Catalyzes the decarboxylation of L-malate to L-lactate. The chain is Malolactic enzyme from Lactiplantibacillus plantarum (strain ATCC BAA-793 / NCIMB 8826 / WCFS1) (Lactobacillus plantarum).